The sequence spans 314 residues: uncharacterized protein (314 aa).

A signal peptide spans 1–24 (MKRRRRWRGWLLFPALCFCLLCEA). N-linked (GlcNAc...) asparagine; by host glycans are attached at residues Asn28, Asn43, Asn57, Asn77, Asn101, Asn102, Asn109, Asn151, Asn170, Asn217, Asn223, Asn252, Asn255, and Asn268. Positions 47–114 (ATTGTTTTSP…TIGTNATSPS (68 aa)) are enriched in low complexity. The tract at residues 47–116 (ATTGTTTTSP…GTNATSPSPS (70 aa)) is disordered.

Belongs to the HHV-5 UL116 protein family. In terms of assembly, interacts with gH. Interacts with UL148. Highly glycosylated.

The protein resides in the virion. It is found in the host endoplasmic reticulum. In terms of biological role, chaperone protein that cooperates with UL148 to regulate the abundance of gH complexes in virion. First interactor of gH in the host endoplasmic reticulum, regulates the early folding steps of virion assembly. Then, UL148 is recruited and favors the binding of gL. This is an uncharacterized protein from Homo sapiens (Human).